The sequence spans 546 residues: High-affinity glucose transporter ght5 (546 aa).

Residues 1-9 lie on the Cytoplasmic side of the membrane; the sequence is MGKNLTIVM. The helical transmembrane segment at 10 to 30 threads the bilayer; it reads LVFVSMAGWMFGADTGSIGGI. At 31–58 the chain is on the extracellular side; that stretch reads TNMRDFQSRFADRYNPVTDSYSYSSARQ. The helical transmembrane segment at 59 to 79 threads the bilayer; that stretch reads GLITGMVNVGSFFGCFLSSPL. Over 80–87 the chain is Cytoplasmic; it reads MDRIGKRT. A helical membrane pass occupies residues 88–108; sequence SIMFWTIVYLIGIILQVTAVP. The Extracellular portion of the chain corresponds to 109–112; it reads SWVQ. Residues 113 to 133 traverse the membrane as a helical segment; sequence IMVAKIWTGLSIGALSVLAPG. Residues 134–144 are Cytoplasmic-facing; that stretch reads FQSEVAPADLR. Residues 145–165 traverse the membrane as a helical segment; it reads GTIVTTYQLAVTGGIFIAACI. At 166–179 the chain is on the extracellular side; that stretch reads NMGTHKLHKTAQWR. Residues 180–200 traverse the membrane as a helical segment; it reads VSMGINLLWGIITFIGISFLP. The Cytoplasmic portion of the chain corresponds to 201 to 266; sequence ESPRYLISVG…IFGPDIRYRT (66 aa). A helical transmembrane segment spans residues 267–285; sequence FLGLGVMSLQQLTGDNYYF. Residues 286-301 lie on the Extracellular side of the membrane; it reads YYGFEVFEGTGMNSPY. The helical transmembrane segment at 302 to 322 threads the bilayer; it reads LSALILDAVNFGCTFGGLFVL. At 323-328 the chain is on the cytoplasmic side; it reads EFFGRR. A helical transmembrane segment spans residues 329 to 349; that stretch reads MPLIIGALWQSITFFIYAAVG. The Extracellular segment spans residues 350–363; sequence NRALTRKNGTSNHR. Asparagine 357 is a glycosylation site (N-linked (GlcNAc...) asparagine). The chain crosses the membrane as a helical span at residues 364–384; that stretch reads AGAVMIVFSCLFIFSFAQTWG. Over 385 to 404 the chain is Cytoplasmic; it reads PAAYVIVGESYPIRYRSKCA. A helical membrane pass occupies residues 405–425; that stretch reads AVATTGNWLWGFLISFFTPFI. The Extracellular portion of the chain corresponds to 426-432; the sequence is TNSIGFK. Residues 433-453 traverse the membrane as a helical segment; it reads YGYIFAACNLCAACIIFLFAH. The Cytoplasmic portion of the chain corresponds to 454–546; sequence ETKGLTLEEI…SYHDQEEQFA (93 aa). The tract at residues 486-546 is disordered; it reads KQQEEVREKS…SYHDQEEQFA (61 aa). A compositionally biased stretch (basic and acidic residues) spans 487–496; that stretch reads QQEEVREKSR. The segment covering 509 to 519 has biased composition (acidic residues); the sequence is VDGEEGIEDSS. The segment covering 520–529 has biased composition (low complexity); the sequence is NDISSTTSSD. Serine 528 and serine 537 each carry phosphoserine. Basic and acidic residues predominate over residues 530 to 546; the sequence is GRAKPESSYHDQEEQFA.

The protein belongs to the major facilitator superfamily. Sugar transporter (TC 2.A.1.1) family.

Its subcellular location is the membrane. Functionally, high-affinity glucose transporter. The protein is High-affinity glucose transporter ght5 (ght5) of Schizosaccharomyces pombe (strain 972 / ATCC 24843) (Fission yeast).